Here is a 679-residue protein sequence, read N- to C-terminus: Penicillin-binding protein 1A (679 aa).

The segment covering 1–14 (MTERKREHKDRKQN) has biased composition (basic residues). Residues 1–20 (MTERKREHKDRKQNKNSPKN) form a disordered region. Over 1 to 30 (MTERKREHKDRKQNKNSPKNQSKVTKFLKW) the chain is Cytoplasmic. The chain crosses the membrane as a helical; Signal-anchor for type II membrane protein span at residues 31–51 (FFIGILLLGITAVTVVGIYVL). Topologically, residues 52–679 (SIIRSSPELD…QYKEVDNLVE (628 aa)) are extracellular. Residues 72–244 (SILYDDQGNF…PTSYDGLSEA (173 aa)) form a transglycosylase region. The active-site Proton donor; for transglycosylase activity is E111. Residues 378–663 (ASATIIDYKT…TSPIFGKIMG (286 aa)) are transpeptidase. S417 acts as the Acyl-ester intermediate; for transpeptidase activity in catalysis.

This sequence in the N-terminal section; belongs to the glycosyltransferase 51 family. In the C-terminal section; belongs to the transpeptidase family.

Its subcellular location is the cell membrane. It catalyses the reaction [GlcNAc-(1-&gt;4)-Mur2Ac(oyl-L-Ala-gamma-D-Glu-L-Lys-D-Ala-D-Ala)](n)-di-trans,octa-cis-undecaprenyl diphosphate + beta-D-GlcNAc-(1-&gt;4)-Mur2Ac(oyl-L-Ala-gamma-D-Glu-L-Lys-D-Ala-D-Ala)-di-trans,octa-cis-undecaprenyl diphosphate = [GlcNAc-(1-&gt;4)-Mur2Ac(oyl-L-Ala-gamma-D-Glu-L-Lys-D-Ala-D-Ala)](n+1)-di-trans,octa-cis-undecaprenyl diphosphate + di-trans,octa-cis-undecaprenyl diphosphate + H(+). It carries out the reaction Preferential cleavage: (Ac)2-L-Lys-D-Ala-|-D-Ala. Also transpeptidation of peptidyl-alanyl moieties that are N-acyl substituents of D-alanine.. The protein operates within cell wall biogenesis; peptidoglycan biosynthesis. Its function is as follows. Cell wall formation. Synthesis of cross-linked peptidoglycan from the lipid intermediates. The enzyme has a penicillin-insensitive transglycosylase N-terminal domain (formation of linear glycan strands) and a penicillin-sensitive transpeptidase C-terminal domain (cross-linking of the peptide subunits). This is Penicillin-binding protein 1A (pbpA) from Clostridium perfringens (strain 13 / Type A).